The sequence spans 419 residues: Squamosa promoter-binding-like protein 2 (419 aa).

The interval 77-96 (SAEVRTHNFTSETGESLPGE) is disordered. The SBP-type zinc-finger motif lies at 166–243 (TPHCQVEGCN…SDHNARRRKP (78 aa)). Residues Cys-169, Cys-174, Cys-191, His-194, Cys-210, Cys-213, His-217, and Cys-229 each contribute to the Zn(2+) site. Positions 226–242 (KRSCRRRLSDHNARRRK) match the Bipartite nuclear localization signal motif. The segment at 230-249 (RRRLSDHNARRRKPNPGRTY) is disordered.

Zn(2+) is required as a cofactor.

It is found in the nucleus. Trans-acting factor that binds specifically to the consensus nucleotide sequence 5'-TNCGTACAA-3'. The chain is Squamosa promoter-binding-like protein 2 (SPL2) from Arabidopsis thaliana (Mouse-ear cress).